Reading from the N-terminus, the 280-residue chain is 4-diphosphocytidyl-2-C-methyl-D-erythritol kinase (280 aa).

Lysine 8 is an active-site residue. 91 to 101 (PVAAGLAGGSA) serves as a coordination point for ATP. The active site involves aspartate 133.

The protein belongs to the GHMP kinase family. IspE subfamily.

It catalyses the reaction 4-CDP-2-C-methyl-D-erythritol + ATP = 4-CDP-2-C-methyl-D-erythritol 2-phosphate + ADP + H(+). Its pathway is isoprenoid biosynthesis; isopentenyl diphosphate biosynthesis via DXP pathway; isopentenyl diphosphate from 1-deoxy-D-xylulose 5-phosphate: step 3/6. Its function is as follows. Catalyzes the phosphorylation of the position 2 hydroxy group of 4-diphosphocytidyl-2C-methyl-D-erythritol. This Clostridium acetobutylicum (strain ATCC 824 / DSM 792 / JCM 1419 / IAM 19013 / LMG 5710 / NBRC 13948 / NRRL B-527 / VKM B-1787 / 2291 / W) protein is 4-diphosphocytidyl-2-C-methyl-D-erythritol kinase.